We begin with the raw amino-acid sequence, 131 residues long: Protein Turandot M (131 aa).

A signal peptide spans 1-23 (MNPTVYLSCLVVFSLFYLGKAQA).

It belongs to the Turandot family.

The protein localises to the secreted. In terms of biological role, a humoral factor that may play a role in stress tolerance. Requires Mekk1 expression in the fat body to regulate response to septic injury and consequent immune response. The polypeptide is Protein Turandot M (Drosophila yakuba (Fruit fly)).